The primary structure comprises 181 residues: Mitochondrial pyruvate carrier-like protein (181 aa).

Transmembrane regions (helical) follow at residues 23–42 and 52–74; these read YLAS…PLAA and IISG…FAYR. A disordered region spans residues 125 to 154; it reads TGSVDSSATSTGSVDSSATSTGSVDSSAAT.

Belongs to the mitochondrial pyruvate carrier (MPC) (TC 2.A.105) family.

It localises to the mitochondrion inner membrane. Its function is as follows. May mediate the uptake of pyruvate into mitochondria. The chain is Mitochondrial pyruvate carrier-like protein from Bos taurus (Bovine).